Reading from the N-terminus, the 213-residue chain is Large ribosomal subunit protein uL1 (213 aa).

This sequence belongs to the universal ribosomal protein uL1 family. As to quaternary structure, part of the 50S ribosomal subunit.

Functionally, binds directly to 23S rRNA. Probably involved in E site tRNA release. Its function is as follows. Protein L1 is also a translational repressor protein, it controls the translation of its operon by binding to its mRNA. The polypeptide is Large ribosomal subunit protein uL1 (Methanococcoides burtonii (strain DSM 6242 / NBRC 107633 / OCM 468 / ACE-M)).